Reading from the N-terminus, the 203-residue chain is NAD(P)H dehydrogenase (quinone) (203 aa).

The Flavodoxin-like domain occupies 7–194 (VLVLYHSSYG…SLARKQGAHV (188 aa)). FMN-binding positions include 13–18 (SSYGHI) and 82–84 (TRF). Position 15 (Tyr-15) interacts with NAD(+). Position 102 (Trp-102) interacts with substrate. FMN-binding positions include 117–122 (STGTGG) and His-137.

The protein belongs to the WrbA family. FMN is required as a cofactor.

It carries out the reaction a quinone + NADH + H(+) = a quinol + NAD(+). It catalyses the reaction a quinone + NADPH + H(+) = a quinol + NADP(+). This chain is NAD(P)H dehydrogenase (quinone), found in Parvibaculum lavamentivorans (strain DS-1 / DSM 13023 / NCIMB 13966).